We begin with the raw amino-acid sequence, 239 residues long: tRNA1(Val) (adenine(37)-N6)-methyltransferase (239 aa).

It belongs to the methyltransferase superfamily. tRNA (adenine-N(6)-)-methyltransferase family.

The protein localises to the cytoplasm. The catalysed reaction is adenosine(37) in tRNA1(Val) + S-adenosyl-L-methionine = N(6)-methyladenosine(37) in tRNA1(Val) + S-adenosyl-L-homocysteine + H(+). Its function is as follows. Specifically methylates the adenine in position 37 of tRNA(1)(Val) (anticodon cmo5UAC). The chain is tRNA1(Val) (adenine(37)-N6)-methyltransferase from Trichodesmium erythraeum (strain IMS101).